We begin with the raw amino-acid sequence, 248 residues long: Ribonuclease 3 (248 aa).

In terms of domain architecture, RNase III spans 15–142 (LKAFFKQYHV…MIAALYLDLG (128 aa)). E55 provides a ligand contact to Mg(2+). The active site involves D59. Positions 128 and 131 each coordinate Mg(2+). E131 is an active-site residue. Positions 169–240 (DYKTELQEFL…ARDALQKLAT (72 aa)) constitute a DRBM domain.

The protein belongs to the ribonuclease III family. In terms of assembly, homodimer. Mg(2+) serves as cofactor.

It localises to the cytoplasm. The catalysed reaction is Endonucleolytic cleavage to 5'-phosphomonoester.. In terms of biological role, digests double-stranded RNA. Involved in the processing of primary rRNA transcript to yield the immediate precursors to the large and small rRNAs (23S and 16S). Processes some mRNAs, and tRNAs when they are encoded in the rRNA operon. Processes pre-crRNA and tracrRNA of type II CRISPR loci if present in the organism. The chain is Ribonuclease 3 from Spiroplasma citri.